A 339-amino-acid chain; its full sequence is Methylthioribose-1-phosphate isomerase (339 aa).

Substrate-binding positions include R49–A51, R86, and Q187. The active-site Proton donor is D228. Substrate is bound at residue N238–K239.

This sequence belongs to the eIF-2B alpha/beta/delta subunits family. MtnA subfamily.

It catalyses the reaction 5-(methylsulfanyl)-alpha-D-ribose 1-phosphate = 5-(methylsulfanyl)-D-ribulose 1-phosphate. The protein operates within amino-acid biosynthesis; L-methionine biosynthesis via salvage pathway; L-methionine from S-methyl-5-thio-alpha-D-ribose 1-phosphate: step 1/6. Its function is as follows. Catalyzes the interconversion of methylthioribose-1-phosphate (MTR-1-P) into methylthioribulose-1-phosphate (MTRu-1-P). The polypeptide is Methylthioribose-1-phosphate isomerase (Cronobacter sakazakii (strain ATCC BAA-894) (Enterobacter sakazakii)).